A 203-amino-acid chain; its full sequence is Molybdenum cofactor guanylyltransferase (203 aa).

GTP contacts are provided by residues 20-22 (LAG), K33, N61, D78, and D108. D108 contacts Mg(2+).

The protein belongs to the MobA family. As to quaternary structure, monomer. Mg(2+) is required as a cofactor.

The protein resides in the cytoplasm. It catalyses the reaction Mo-molybdopterin + GTP + H(+) = Mo-molybdopterin guanine dinucleotide + diphosphate. Functionally, transfers a GMP moiety from GTP to Mo-molybdopterin (Mo-MPT) cofactor (Moco or molybdenum cofactor) to form Mo-molybdopterin guanine dinucleotide (Mo-MGD) cofactor. The protein is Molybdenum cofactor guanylyltransferase of Vibrio cholerae serotype O1 (strain ATCC 39315 / El Tor Inaba N16961).